An 82-amino-acid polypeptide reads, in one-letter code: RNA-binding protein Hfq (82 aa).

In terms of domain architecture, Sm spans 11 to 71 (DTFLNHVRKT…ISTIMPGAPI (61 aa)).

The protein belongs to the Hfq family. In terms of assembly, homohexamer.

RNA chaperone that binds small regulatory RNA (sRNAs) and mRNAs to facilitate mRNA translational regulation in response to envelope stress, environmental stress and changes in metabolite concentrations. Also binds with high specificity to tRNAs. The sequence is that of RNA-binding protein Hfq from Rhodopseudomonas palustris (strain BisA53).